The sequence spans 947 residues: Mitogen-activated protein kinase kinase kinase 14 (947 aa).

Disordered stretches follow at residues 1 to 37 (MAVMEMACPGAPGSAVGQQKELPKAKEKTPPLGKKQS) and 135 to 171 (KGKRRSKARKKRKKKSSKSLAHAGVALAKPLPRTPEQ). Residues 135–151 (KGKRRSKARKKRKKKSS) are compositionally biased toward basic residues. Residues 400 to 655 (ATHQLRLGRG…ELGGKVNRAL (256 aa)) form the Protein kinase domain. An interaction with ZFP91 region spans residues 401–653 (THQLRLGRGS…AAELGGKVNR (253 aa)). ATP-binding positions include 406-414 (LGRGSFGEV) and Lys-429. Asp-515 (proton acceptor) is an active-site residue. Phosphothreonine is present on Thr-559. Disordered stretches follow at residues 662–766 (KSPW…ATVP) and 805–830 (LSDDSEKNPSKASQSSRDTLSSGVHS). Basic and acidic residues predominate over residues 665–674 (WRGEYKEPRH). Positions 713–727 (LQPPLPPEPPEPNKS) are enriched in pro residues. Residues 741-752 (EPLPLSSLEPAP) are compositionally biased toward low complexity. A compositionally biased stretch (polar residues) spans 814–829 (SKASQSSRDTLSSGVH).

It belongs to the protein kinase superfamily. STE Ser/Thr protein kinase family. MAP kinase kinase kinase subfamily. As to quaternary structure, interacts with TRAF2, TRAF5, TRAF6, IKKA and NFKB2/P100. Interacts with TRAF3 and PELI3. Interacts with NIBP; the interaction is direct. Interacts with ARRB1 and ARRB2. Interacts with GRB10. Interacts with ZFP91. Interacts with NLRP12; this interaction promotes proteasomal degradation of MAP3K14. Directly interacts with DDX3X. Interacts (via C-terminus and kinase domain) with PPPC3A (via N-terminus) and PPP3CB. Autophosphorylated. Phosphorylation at Thr-559 is required to activate its kinase activity and 'Lys-63'-linked polyubiquitination. Phosphorylated by CHUK/IKKA leading to MAP3K14 destabilization. In terms of processing, ubiquitinated. Undergoes both 'Lys-48'- and 'Lys-63'-linked polyubiquitination. 'Lys-48'-linked polyubiquitination leads to its degradation by the proteasome, while 'Lys-63'-linked polyubiquitination stabilizes and activates it. Weakly expressed in testis, small intestine, spleen, thymus, peripheral blood leukocytes, prostate, ovary and colon.

The protein localises to the cytoplasm. It carries out the reaction L-seryl-[protein] + ATP = O-phospho-L-seryl-[protein] + ADP + H(+). It catalyses the reaction L-threonyl-[protein] + ATP = O-phospho-L-threonyl-[protein] + ADP + H(+). Functionally, lymphotoxin beta-activated kinase which seems to be exclusively involved in the activation of NF-kappa-B and its transcriptional activity. Phosphorylates CHUK/IKKA, thereby promoting proteolytic processing of NFKB2/P100, which leads to NF-kappa-B activation via the non-canonical pathway. Has an essential role in the non-canonical NF-kappa-B signaling that regulates genes encoding molecules involved in B-cell survival, lymphoid organogenesis, and immune response. Could act in a receptor-selective manner. This Homo sapiens (Human) protein is Mitogen-activated protein kinase kinase kinase 14.